The chain runs to 342 residues: Ribosomal RNA small subunit methyltransferase H (342 aa).

Residues 36–38 (GGH), Asp-56, Phe-82, Asp-100, and Gln-107 contribute to the S-adenosyl-L-methionine site. The tract at residues 309 to 342 (ENRESGMGKGHGAAASRFPTPDSRFPTSPNGDAP) is disordered. Residues 333–342 (FPTSPNGDAP) are compositionally biased toward polar residues.

This sequence belongs to the methyltransferase superfamily. RsmH family.

It is found in the cytoplasm. The enzyme catalyses cytidine(1402) in 16S rRNA + S-adenosyl-L-methionine = N(4)-methylcytidine(1402) in 16S rRNA + S-adenosyl-L-homocysteine + H(+). In terms of biological role, specifically methylates the N4 position of cytidine in position 1402 (C1402) of 16S rRNA. This chain is Ribosomal RNA small subunit methyltransferase H, found in Xanthomonas campestris pv. campestris (strain 8004).